Consider the following 503-residue polypeptide: MAELLASLPAWAAVLLLFFATVSGSTGPRSRENRGASRIPSQFSEEERVAIKEALKGAIQIPTVSFSHEESNTTALAEFGEYIRKAFPTVFHSSLVQHEVVAKYSHLFTIQGSDPSLQPYMLMAHIDVVPAPEEGWEVPPFSGLERNGFIYGRGALDNKNSVMAILHALELLLIRNYSPKRSFFIALGHDEEVSGEKGAQKISALLQARGVQLAFLVDEGSFILEGFIPNLEKPVAMISVTEKGALDLMLQVNMTPGHSSAPPKETSIGILSAAVSRLEQTPMPNMFGGGPLKKTMKLLANEFSFPINIVLRNLWLFHPIVSRIMERNPITNALVRTTTALTMFNAGIKVNVIPPLAQATINCRIHPSQTVHEVLELVKNTVADDRVQLHVLRSFEPLPISPSDDQAMGYQLLQETIRSVFPEVDIVVPGICIANTDTRHYANITNGMYRFNPLPLNPQDFSGVHGINEKVSVQNYQNQVKFIFEFIQNADTYKEPVPHLHEL.

An N-terminal signal peptide occupies residues 1–24 (MAELLASLPAWAAVLLLFFATVSG). A glycan (N-linked (GlcNAc...) asparagine) is linked at Asn-72. His-125 is a binding site for Zn(2+). The active site involves Asp-127. Zn(2+) is bound at residue Asp-157. Glu-191 serves as the catalytic Proton acceptor. Residues Glu-192 and Asp-218 each coordinate Zn(2+). Asn-443 carries an N-linked (GlcNAc...) asparagine glycan. Zn(2+) is bound at residue His-465.

Belongs to the peptidase M20A family. Requires Zn(2+) as cofactor. As to expression, in addition to being detected in blood (at protein level), PM20D1 is also highly expressed in other tissues including brown adipocytes, liver and kidney. It is also expressed in small intestine, large intestine, heart and pancreas.

The protein localises to the secreted. The enzyme catalyses an N-acyl-L-amino acid + H2O = an L-alpha-amino acid + a carboxylate. It carries out the reaction an N-acyl-aromatic L-alpha-amino acid + H2O = an aromatic L-alpha-amino acid + a carboxylate. The catalysed reaction is N-(5Z,8Z,11Z,14Z)-eicosatetraenoyl-glycine + H2O = (5Z,8Z,11Z,14Z)-eicosatetraenoate + glycine. It catalyses the reaction N-hexadecanoyl-L-phenylalanine + H2O = hexadecanoate + L-phenylalanine. The enzyme catalyses N-octadecanoyl-L-phenylalanine + H2O = octadecanoate + L-phenylalanine. It carries out the reaction N-(4Z,7Z,10Z,13Z,16Z,19Z-docosahexaenoyl)-L-phenylalanine + H2O = (4Z,7Z,10Z,13Z,16Z,19Z)-docosahexaenoate + L-phenylalanine. The catalysed reaction is N-(9Z-octadecenoyl)-L-asparagine + H2O = L-asparagine + (9Z)-octadecenoate. It catalyses the reaction (9Z)-octadecenoate + glycine = N-(9Z-octadecenoyl)glycine + H2O. The enzyme catalyses N-(9Z-octadecenoyl)-L-lysine + H2O = L-lysine + (9Z)-octadecenoate. It carries out the reaction N-(9Z-octadecenoyl)-L-methionine + H2O = (9Z)-octadecenoate + L-methionine. The catalysed reaction is N-(9Z-octadecenoyl)-L-serine + H2O = L-serine + (9Z)-octadecenoate. It catalyses the reaction N-(9Z-octadecenoyl)-L-tryptophan + H2O = L-tryptophan + (9Z)-octadecenoate. The enzyme catalyses N-(9Z-octadecenoyl)-L-tyrosine + H2O = L-tyrosine + (9Z)-octadecenoate. It carries out the reaction N-(9Z-octadecenoyl)-L-glutamine + H2O = L-glutamine + (9Z)-octadecenoate. The catalysed reaction is N-(5Z,8Z,11Z,14Z-eicosatetraenoyl)-L-serine + H2O = (5Z,8Z,11Z,14Z)-eicosatetraenoate + L-serine. It catalyses the reaction (5Z,8Z,11Z,14Z)-eicosatetraenoate + L-phenylalanine = N-(5Z,8Z,11Z,14Z-eicosatetraenoyl)-L-phenylalanine + H2O. The enzyme catalyses N-(9Z-octadecenoyl)-L-leucine + H2O = L-leucine + (9Z)-octadecenoate. It carries out the reaction L-phenylalanine + (9Z)-octadecenoate = N-(9Z-octadecenoyl)-L-phenylalanine + H2O. The protein operates within amino-acid metabolism. It participates in energy metabolism; electron transfer. Its pathway is lipid metabolism; fatty acid metabolism. Its activity is regulated as follows. Lipoproteins are powerful coactivators of PM20D1 activity in vitro and NAA biosynthesis in vivo. In terms of biological role, secreted enzyme that regulates the endogenous N-fatty acyl amino acid (NAAs) tissue and circulating levels by functioning as a bidirectional NAA synthase/hydrolase. It condenses free fatty acids and free amino acids to generate NAAs and bidirectionally catalyzes the reverse hydrolysis reaction. Some of these NAAs stimulate oxidative metabolism via mitochondrial uncoupling, increasing energy expenditure in a UPC1-independent manner. Thereby, this secreted protein may indirectly regulate whole body energy expenditure. PM20D1 circulates in tight association with both low- and high-density (LDL and HDL,respectively) lipoprotein particles. In Mus musculus (Mouse), this protein is N-fatty-acyl-amino acid synthase/hydrolase PM20D1.